The sequence spans 525 residues: Pre-mRNA-processing factor 19 homolog 2 (525 aa).

A U-box domain is found at 1-70 (MNCAISGEVP…PKTLHTASIP (70 aa)). WD repeat units lie at residues 220 to 261 (TNKP…STLT), 262 to 301 (GHSK…NYAC), 307 to 346 (DHSA…CLAQ), 351 to 390 (SKNV…NVAK), 393 to 431 (GHTG…NFKS), 433 to 469 (LSAD…AEWN), and 478 to 517 (SGTG…KANV). Residues 409–424 (FLATAAEDGVRLWDLR) carry the DWD box motif.

Belongs to the WD repeat PRP19 family. As to quaternary structure, homotetramer. Component of the multiprotein assembly MOS4-associated complex (MAC) at least composed of MOS4, CDC5, PRL1 and PRP19 which is related to the PRP19C/Prp19 complex/NTC/Nineteen complex identified in other organisms. Associated with the spliceosome.

Its subcellular location is the nucleus. The catalysed reaction is S-ubiquitinyl-[E2 ubiquitin-conjugating enzyme]-L-cysteine + [acceptor protein]-L-lysine = [E2 ubiquitin-conjugating enzyme]-L-cysteine + N(6)-ubiquitinyl-[acceptor protein]-L-lysine.. It functions in the pathway protein modification; protein ubiquitination. Probable ubiquitin-protein ligase which is mainly involved pre-mRNA splicing and DNA repair. Component of the MAC complex that probably regulates defense responses through transcriptional control and thereby is essential for plant innate immunity. The polypeptide is Pre-mRNA-processing factor 19 homolog 2 (PRP19B) (Arabidopsis thaliana (Mouse-ear cress)).